Consider the following 841-residue polypeptide: Probable alpha-glucuronidase A (841 aa).

A signal peptide spans 1 to 19 (MLRLPLVLVWSLWASLTVA). 12 N-linked (GlcNAc...) asparagine glycosylation sites follow: asparagine 50, asparagine 104, asparagine 223, asparagine 280, asparagine 311, asparagine 344, asparagine 466, asparagine 528, asparagine 577, asparagine 683, asparagine 724, and asparagine 733.

The protein belongs to the glycosyl hydrolase 67 family.

The protein resides in the secreted. The catalysed reaction is an alpha-D-glucuronoside + H2O = D-glucuronate + an alcohol. Its function is as follows. Alpha-glucuronidase involved in the hydrolysis of xylan, a major structural heterogeneous polysaccharide found in plant biomass representing the second most abundant polysaccharide in the biosphere, after cellulose. Releases 4-O-methylglucuronic acid from xylan. In Aspergillus terreus (strain NIH 2624 / FGSC A1156), this protein is Probable alpha-glucuronidase A (aguA).